The primary structure comprises 581 residues: Arginine--tRNA ligase (581 aa).

A 'HIGH' region motif is present at residues 126–136; the sequence is PNLAKEMHVGH.

The protein belongs to the class-I aminoacyl-tRNA synthetase family. In terms of assembly, monomer.

Its subcellular location is the cytoplasm. The enzyme catalyses tRNA(Arg) + L-arginine + ATP = L-arginyl-tRNA(Arg) + AMP + diphosphate. The chain is Arginine--tRNA ligase from Shewanella amazonensis (strain ATCC BAA-1098 / SB2B).